A 250-amino-acid chain; its full sequence is Dihydroorotate dehydrogenase B (NAD(+)), electron transfer subunit (250 aa).

In terms of domain architecture, FAD-binding FR-type spans 1 to 94; sequence MKVVAQEEIA…MGPQGNGFDL (94 aa). Residues 45-48, 62-64, and 69-70 contribute to the FAD site; these read RPIS, IYR, and GT. Residues cysteine 214, cysteine 219, cysteine 222, and cysteine 237 each contribute to the [2Fe-2S] cluster site.

Belongs to the PyrK family. In terms of assembly, heterotetramer of 2 PyrK and 2 PyrD type B subunits. [2Fe-2S] cluster is required as a cofactor. It depends on FAD as a cofactor.

It functions in the pathway pyrimidine metabolism; UMP biosynthesis via de novo pathway; orotate from (S)-dihydroorotate (NAD(+) route): step 1/1. Functionally, responsible for channeling the electrons from the oxidation of dihydroorotate from the FMN redox center in the PyrD type B subunit to the ultimate electron acceptor NAD(+). The chain is Dihydroorotate dehydrogenase B (NAD(+)), electron transfer subunit from Streptococcus pneumoniae serotype 4 (strain ATCC BAA-334 / TIGR4).